The primary structure comprises 325 residues: DNA repair and recombination protein RadA (325 aa).

Residue 107 to 114 (GEFGSGKT) participates in ATP binding.

This sequence belongs to the eukaryotic RecA-like protein family.

Involved in DNA repair and in homologous recombination. Binds and assemble on single-stranded DNA to form a nucleoprotein filament. Hydrolyzes ATP in a ssDNA-dependent manner and promotes DNA strand exchange between homologous DNA molecules. The chain is DNA repair and recombination protein RadA from Methanosarcina acetivorans (strain ATCC 35395 / DSM 2834 / JCM 12185 / C2A).